Reading from the N-terminus, the 111-residue chain is MYLTITRPDLTFAVNRLSQFSSASRTAQMQAVYKVLHYVKGTVGQGLFYSATSDLQLKAFADSDWASCPDTRRSVTGFCSLVPLWFLGALRKSILSPGLLQRQNIEALHLL.

The protein localises to the mitochondrion. This is an uncharacterized protein from Arabidopsis thaliana (Mouse-ear cress).